Here is a 115-residue protein sequence, read N- to C-terminus: Large ribosomal subunit protein bL19 (115 aa).

Belongs to the bacterial ribosomal protein bL19 family.

In terms of biological role, this protein is located at the 30S-50S ribosomal subunit interface and may play a role in the structure and function of the aminoacyl-tRNA binding site. The polypeptide is Large ribosomal subunit protein bL19 (Klebsiella pneumoniae (strain 342)).